A 309-amino-acid polypeptide reads, in one-letter code: Protein FdhE (309 aa).

Belongs to the FdhE family.

The protein localises to the cytoplasm. Functionally, necessary for formate dehydrogenase activity. The polypeptide is Protein FdhE (Escherichia coli (strain SMS-3-5 / SECEC)).